The primary structure comprises 591 residues: Proteasome-associated ATPase (591 aa).

Residues 8 to 77 (DSVAAARELE…LREEVDRLGQ (70 aa)) adopt a coiled-coil conformation. Position 278-283 (278-283 (GCGKTL)) interacts with ATP. The interval 590-591 (YL) is docks into pockets in the proteasome alpha-ring.

Belongs to the AAA ATPase family. In terms of assembly, homohexamer. Assembles into a hexameric ring structure that caps the 20S proteasome core. Strongly interacts with the prokaryotic ubiquitin-like protein Pup through a hydrophobic interface; the interacting region of ARC lies in its N-terminal coiled-coil domain. There is one Pup binding site per ARC hexamer ring. Upon ATP-binding, the C-terminus of ARC interacts with the alpha-rings of the proteasome core, possibly by binding to the intersubunit pockets.

The protein operates within protein degradation; proteasomal Pup-dependent pathway. In terms of biological role, ATPase which is responsible for recognizing, binding, unfolding and translocation of pupylated proteins into the bacterial 20S proteasome core particle. May be essential for opening the gate of the 20S proteasome via an interaction with its C-terminus, thereby allowing substrate entry and access to the site of proteolysis. Thus, the C-termini of the proteasomal ATPase may function like a 'key in a lock' to induce gate opening and therefore regulate proteolysis. The chain is Proteasome-associated ATPase from Rhodococcus jostii (strain RHA1).